Reading from the N-terminus, the 119-residue chain is MMVTLVTRKDIPPWVKVPEDLTDPEVFQVQSLVLKYLFGPQGSRMSHIEQVSQAMFELKNLESPEELIEVFIYGYQSIKVRAKWLLQSMAERYHLRQQKRPSLTTFWEFGGPDVSLKEC.

Residues 24 to 86 (PEVFQVQSLV…SIKVRAKWLL (63 aa)) enclose the KH; atypical domain.

This sequence belongs to the KHDC1 family.

The protein localises to the cytoplasm. Its function is as follows. Involved in the maintenance of embryonic stem (ES) cell pluripotency. Dispensable for self-renewal of pluripotent ES cells and establishment of germ cells. Associates with specific target mRNAs. This chain is Developmental pluripotency-associated protein 5B/5C, found in Mus musculus (Mouse).